The following is a 64-amino-acid chain: Insect toxin OsI1 (64 aa).

In terms of domain architecture, LCN-type CS-alpha/beta spans 1–61 (DGYPKQKDGC…MWKYETNTCG (61 aa)). Intrachain disulfides connect Cys10–Cys60, Cys14–Cys35, Cys21–Cys42, and Cys25–Cys44. Gly61 is subject to Glycine amide.

This sequence belongs to the long (4 C-C) scorpion toxin superfamily. Sodium channel inhibitor family. Beta subfamily. As to expression, expressed by the venom gland.

It is found in the secreted. In terms of biological role, depressant insect beta-toxins cause a transient contraction paralysis followed by a slow flaccid paralysis. They bind voltage-independently at site-4 of sodium channels (Nav) and shift the voltage of activation toward more negative potentials thereby affecting sodium channel activation and promoting spontaneous and repetitive firing. This toxin is active only on insects. The protein is Insect toxin OsI1 of Orthochirus scrobiculosus (Central Asian scorpion).